Here is a 553-residue protein sequence, read N- to C-terminus: MAKMIVFDETARRALERGVNALADAVRVTLGPKGRNVVLEKKFGAPQIVNDGVTIAKEIELEDPLENTGAQLIREVASKTNDVAGDGTTTATVLAQALIREGLRNVAAGANPMSLKRGMEKTVAKLVQEIAAMAKPVEDNKTIAEVATISSGNDEEIGQMIAEAMDKVGKEGVITVEESKSLVTELDVVEGMQFDKGYVSPYFVTDTERMITDLDEPFILLTDKKISIIQDLIPVLEKVARAGRPLLIISEDLEGEALATLVVNKLRGVLNCVAVKAPGFGDRRKAMLQDIAVLTGGDVISEDIGLKLENVTIDMLGKARKVTITKDKTTIVAGTDNKAAVEKRIAQIHKQMEDTDSDFDREKLQERLAKLAGGVAVIKVGAATETELKDRKLRIEDALNATKAAVEEGIVPGGGTTLLHLTKKIDAIKAGLADDEKTGADLIARALEAPLRQIADNAGVEGSVIAQKVRELDFNIGYDAMKGEFVDMLAAGVADPAKVVRSALQNAASIAAMVLTTEVLIVDKPEKKKAGAGAPDMGGMGGMGGMGGMGGMM.

ATP is bound by residues 29 to 32 (TLGP), 86 to 90 (DGTTT), Gly414, and Asp495.

This sequence belongs to the chaperonin (HSP60) family. Forms a cylinder of 14 subunits composed of two heptameric rings stacked back-to-back. Interacts with the co-chaperonin GroES.

It localises to the cytoplasm. It catalyses the reaction ATP + H2O + a folded polypeptide = ADP + phosphate + an unfolded polypeptide.. In terms of biological role, together with its co-chaperonin GroES, plays an essential role in assisting protein folding. The GroEL-GroES system forms a nano-cage that allows encapsulation of the non-native substrate proteins and provides a physical environment optimized to promote and accelerate protein folding. This Gloeobacter violaceus (strain ATCC 29082 / PCC 7421) protein is Chaperonin GroEL 2.